The sequence spans 130 residues: ACDNCSVAQYKVEYSISTQENVLDVWKVGCISEGVPVCDGTYPFSIEVSLIWVATDSTRRLNVEELNSSDYIEGDFTDQEVFGEFMSLKQVEMKTIEAKYDGPYRPATTRPKSLVSSEDVKGASKKKNSS.

The interval 100–130 is disordered; sequence YDGPYRPATTRPKSLVSSEDVKGASKKKNSS.

This chain is 29 kDa protein, found in Beta vulgaris (Sugar beet).